A 257-amino-acid chain; its full sequence is MVLIRVLANLLLLQLSYAQKSSELVVGGDECNINEHRSLVFLYNSSFGCGGTLINQQWVLSAAHCDMENVQIYLGLHNLRLRNQDEQIRVAEEKFFCLSNKSYTKWDKDIMLIRLNSSVTYNTHIAPLSLPSSPPRVGSVCRIMGWGAITSPNETFPNVPHCANINILRYSVCRAAYRGLPAQSRTLCAGILQGGIGSCMGDSGGPLICNGEIQGIVSWGDDICAQPHKPVHYTKVFDYSDWIQSIIAGNTTATCPL.

The first 18 residues, 1 to 18 (MVLIRVLANLLLLQLSYA), serve as a signal peptide directing secretion. The propeptide occupies 19-24 (QKSSEL). In terms of domain architecture, Peptidase S1 spans 25–248 (VVGGDECNIN…YSDWIQSIIA (224 aa)). Intrachain disulfides connect C31–C162, C49–C65, C97–C255, C141–C209, C173–C188, and C199–C224. Residue N44 is glycosylated (N-linked (GlcNAc...) asparagine). H64 functions as the Charge relay system in the catalytic mechanism. A glycan (N-linked (GlcNAc...) asparagine) is linked at N100. Residue D109 is the Charge relay system of the active site. 2 N-linked (GlcNAc...) asparagine glycosylation sites follow: N116 and N153. Residue S203 is the Charge relay system of the active site. N250 carries N-linked (GlcNAc...) asparagine glycosylation.

Belongs to the peptidase S1 family. Snake venom subfamily. In terms of assembly, monomer. Partial deglycosylation has not effect on enzyme activity. In terms of tissue distribution, expressed by the venom gland.

It localises to the secreted. Inhibited by PMSF. Functionally, snake venom serine protease with tyrosine-specific chymotrypsin-like activity. Hydrolyzes the N-acetyl-L-tyrosine ethyl ester (ATEE). Has weak fibrinogenolytic activity. Weakly hydrolyzes azocasein, Aalpha-chain (FGA) and more slowly Bbeta-chain (FGB) of fibrinogen. Optimal substrates are angiotensins I and II (AGT). The polypeptide is Chymotrypsin-like protease VLCTLP (Macrovipera lebetinus (Levantine viper)).